The sequence spans 356 residues: Cyclin-D2-2 (356 aa).

The span at 325 to 343 shows a compositional bias: polar residues; sequence LGSSQSNSNNKDYNSQDSA. The segment at 325–356 is disordered; sequence LGSSQSNSNNKDYNSQDSAPASKRRRLNTTPI. A compositionally biased stretch (basic residues) spans 346-356; it reads SKRRRLNTTPI.

Belongs to the cyclin family. Cyclin D subfamily.

This Oryza sativa subsp. japonica (Rice) protein is Cyclin-D2-2 (CYCD2-2).